Consider the following 110-residue polypeptide: Large ribosomal subunit protein uL22 (110 aa).

This sequence belongs to the universal ribosomal protein uL22 family. In terms of assembly, part of the 50S ribosomal subunit.

Functionally, this protein binds specifically to 23S rRNA; its binding is stimulated by other ribosomal proteins, e.g. L4, L17, and L20. It is important during the early stages of 50S assembly. It makes multiple contacts with different domains of the 23S rRNA in the assembled 50S subunit and ribosome. The globular domain of the protein is located near the polypeptide exit tunnel on the outside of the subunit, while an extended beta-hairpin is found that lines the wall of the exit tunnel in the center of the 70S ribosome. The polypeptide is Large ribosomal subunit protein uL22 (Marinobacter nauticus (strain ATCC 700491 / DSM 11845 / VT8) (Marinobacter aquaeolei)).